The following is a 350-amino-acid chain: MDINLFDFHLPEELIAQVPLEDRETSRLMVLDRETGDIEHKHFTDILSYLHEGDCLVLNETKVMPARLHGVKEDTGAHIEVLLLKQEEGDKWETLVKPAKRVKEGTVISFGEGKLKATCTGTADQGGRQLEFSYDGIFYEILDELGEMPLPPYIKETLEDRDRYQTVYAKEIGSAAAPTAGLHFTEELLEKLKQKGVQLAFITLHVGLGTFRPVSADTIEEHHMHAEYYHMSEETAALLNRVKENGGRIITVGTTSTRTLETIATDHNGKLCAASGWTDIFMYPGYEFKAIDGLITNFHLPKSTLIMLVSAFANRDNVLHAYNEAVKEKYRFFSFGDAMFVASHAKMRNK.

This sequence belongs to the QueA family. In terms of assembly, monomer.

The protein localises to the cytoplasm. It catalyses the reaction 7-aminomethyl-7-carbaguanosine(34) in tRNA + S-adenosyl-L-methionine = epoxyqueuosine(34) in tRNA + adenine + L-methionine + 2 H(+). It participates in tRNA modification; tRNA-queuosine biosynthesis. Its function is as follows. Transfers and isomerizes the ribose moiety from AdoMet to the 7-aminomethyl group of 7-deazaguanine (preQ1-tRNA) to give epoxyqueuosine (oQ-tRNA). The chain is S-adenosylmethionine:tRNA ribosyltransferase-isomerase from Bacillus cereus (strain G9842).